Reading from the N-terminus, the 251-residue chain is Ubiquinone/menaquinone biosynthesis C-methyltransferase UbiE (251 aa).

3 residues coordinate S-adenosyl-L-methionine: T74, D92, and S132.

The protein belongs to the class I-like SAM-binding methyltransferase superfamily. MenG/UbiE family.

The catalysed reaction is a 2-demethylmenaquinol + S-adenosyl-L-methionine = a menaquinol + S-adenosyl-L-homocysteine + H(+). It catalyses the reaction a 2-methoxy-6-(all-trans-polyprenyl)benzene-1,4-diol + S-adenosyl-L-methionine = a 5-methoxy-2-methyl-3-(all-trans-polyprenyl)benzene-1,4-diol + S-adenosyl-L-homocysteine + H(+). It participates in quinol/quinone metabolism; menaquinone biosynthesis; menaquinol from 1,4-dihydroxy-2-naphthoate: step 2/2. The protein operates within cofactor biosynthesis; ubiquinone biosynthesis. Its function is as follows. Methyltransferase required for the conversion of demethylmenaquinol (DMKH2) to menaquinol (MKH2) and the conversion of 2-polyprenyl-6-methoxy-1,4-benzoquinol (DDMQH2) to 2-polyprenyl-3-methyl-6-methoxy-1,4-benzoquinol (DMQH2). The chain is Ubiquinone/menaquinone biosynthesis C-methyltransferase UbiE from Rubrivivax gelatinosus (strain NBRC 100245 / IL144).